The chain runs to 192 residues: Small ribosomal subunit protein eS7 (192 aa).

It belongs to the eukaryotic ribosomal protein eS7 family.

This is Small ribosomal subunit protein eS7 (RPS7) from Secale cereale (Rye).